The chain runs to 417 residues: Serine hydroxymethyltransferase 1 (417 aa).

Residues leucine 121 and 125 to 127 (GHL) contribute to the (6S)-5,6,7,8-tetrahydrofolate site. The residue at position 229 (lysine 229) is an N6-(pyridoxal phosphate)lysine. Residue 354-356 (SPF) participates in (6S)-5,6,7,8-tetrahydrofolate binding.

Belongs to the SHMT family. In terms of assembly, homodimer. Requires pyridoxal 5'-phosphate as cofactor.

The protein localises to the cytoplasm. It catalyses the reaction (6R)-5,10-methylene-5,6,7,8-tetrahydrofolate + glycine + H2O = (6S)-5,6,7,8-tetrahydrofolate + L-serine. The protein operates within one-carbon metabolism; tetrahydrofolate interconversion. Its pathway is amino-acid biosynthesis; glycine biosynthesis; glycine from L-serine: step 1/1. Catalyzes the reversible interconversion of serine and glycine with tetrahydrofolate (THF) serving as the one-carbon carrier. This reaction serves as the major source of one-carbon groups required for the biosynthesis of purines, thymidylate, methionine, and other important biomolecules. Also exhibits THF-independent aldolase activity toward beta-hydroxyamino acids, producing glycine and aldehydes, via a retro-aldol mechanism. In Pseudomonas savastanoi pv. phaseolicola (strain 1448A / Race 6) (Pseudomonas syringae pv. phaseolicola (strain 1448A / Race 6)), this protein is Serine hydroxymethyltransferase 1.